A 259-amino-acid chain; its full sequence is MSDLYAHRESDEYLLKPEHFAEKKNRPKRWDCLRPIIYTSLAFVGFIEILFFGIFFAQATRKTPERLLGELNGLVGNFPARRVIFRSDPLAASDHKTEESRNATMNNWLSYMPRGNGFIAVNQTERYTLPPPIKQLGQDTYSIAVFHQLHCLYAIMSVYDDLAAAKSAADLNAHHSRDDTHSNEHPHEQVHVHSHDHVDHCFQYLRQSLLCCGDTALEGQDPRTDNPGTDGTGAVHICKDFDGILAWADSRRLVDAKHN.

A helical membrane pass occupies residues 36-56; the sequence is IIYTSLAFVGFIEILFFGIFF. Residues Asn102 and Asn122 are each glycosylated (N-linked (GlcNAc...) asparagine). 2 short sequence motifs (HXXHC) span residues 147 to 151 and 197 to 201; these read HQLHC and HVDHC.

Belongs to the ustYa family.

The protein localises to the membrane. It functions in the pathway mycotoxin biosynthesis. Oxidase; part of the gene cluster that mediates the biosynthesis of the secondary metabolite ustiloxin B, an antimitotic tetrapeptide. First, ustA is processed by the subtilisin-like endoprotease Kex2 that is outside the ustiloxin B gene cluster, at the C-terminal side of Arg-Lys, after transfer to Golgi apparatus through the endoplasmic reticulum (ER). Cleavage by KEX2 generates 16 peptides YAIG-I to YAIG-XVI. To process the precursor peptide further, at least two peptidases are necessary to cleave the N-terminal and C-terminal sides of the Tyr-Ala-Ile-Gly core peptide which serves as backbone for the synthesis of ustiloxin B, through cyclization and modification of the tyrosine with a non-protein coding amino acid, norvaline. One of the two peptidases must be the serine peptidase ustP; and the other pepdidase is probably ustH. Macrocyclization of the core peptide derived from ustA requires the tyrosinase ustQ, as well as the homologous oxidases ustYa and ustYb, and leads to the production of the first cyclization product N-desmethylustiloxin F. For the formation of N-desmethylustiloxin F, three oxidation steps are required, hydroxylation at the benzylic position, hydroxylation at either the aromatic ring of Tyr or beta-position of Ile, and oxidative cyclization. UstQ may catalyze the oxidation of a phenol moiety, whereas the ustYa and ustYb are most likely responsible for the remaining two-step oxidations. N-desmethylustiloxin F is then methylated by ustM to yield ustiloxin F which in turn substrate of the cytochrome P450 monooxygenase ustC which catalyzes the formation of S-deoxyustiloxin H. The flavoprotein monooxygenases ustF1 and ustF2 then participate in the modification of the side chain of S-deoxyustiloxin H, leading to the synthesis of an oxime intermediate, via ustiloxin H. Finally, carboxylative dehydration performed by the cysteine desulfurase-like protein ustD yields ustiloxin B. This Aspergillus flavus (strain ATCC 200026 / FGSC A1120 / IAM 13836 / NRRL 3357 / JCM 12722 / SRRC 167) protein is Oxidase ustYb.